The following is a 130-amino-acid chain: Phosphoribosyl-AMP cyclohydrolase (130 aa).

D77 contributes to the Mg(2+) binding site. C78 is a binding site for Zn(2+). 2 residues coordinate Mg(2+): D79 and D81. C95 and C102 together coordinate Zn(2+).

Belongs to the PRA-CH family. Homodimer. It depends on Mg(2+) as a cofactor. Zn(2+) serves as cofactor.

The protein localises to the cytoplasm. The catalysed reaction is 1-(5-phospho-beta-D-ribosyl)-5'-AMP + H2O = 1-(5-phospho-beta-D-ribosyl)-5-[(5-phospho-beta-D-ribosylamino)methylideneamino]imidazole-4-carboxamide. Its pathway is amino-acid biosynthesis; L-histidine biosynthesis; L-histidine from 5-phospho-alpha-D-ribose 1-diphosphate: step 3/9. Catalyzes the hydrolysis of the adenine ring of phosphoribosyl-AMP. This chain is Phosphoribosyl-AMP cyclohydrolase, found in Pseudomonas savastanoi pv. phaseolicola (strain 1448A / Race 6) (Pseudomonas syringae pv. phaseolicola (strain 1448A / Race 6)).